The chain runs to 76 residues: Large ribosomal subunit protein eL20 (76 aa).

It belongs to the eukaryotic ribosomal protein eL20 family. As to quaternary structure, part of the 50S ribosomal subunit. Binds 23S rRNA.

In Methanococcus maripaludis (strain DSM 14266 / JCM 13030 / NBRC 101832 / S2 / LL), this protein is Large ribosomal subunit protein eL20.